Consider the following 259-residue polypeptide: Protein FAM220A (259 aa).

Disordered stretches follow at residues 1–44 (MRDR…ADAP) and 131–154 (LGGGPRATDGHRGQCPKGEPRVSR). Positions 138 to 152 (TDGHRGQCPKGEPRV) are enriched in basic and acidic residues.

In terms of assembly, interacts with transcriptional activator STAT3; the interaction occurs in both the nucleus and the cytoplasm, is enhanced by IL6 and promotes STAT3 dephosphorylation, leading to negative regulation of STAT3 transcriptional activator activity. Can interact with both unphosphorylated and phosphorylated STAT3 but interacts preferentially with phosphorylated STAT3 in the nucleus. Interacts with protein phosphatase PTPN2/TC45; this promotes interaction of PTPN2 with STAT3, leading to dephosphorylation of STAT3 by PTPN2.

It localises to the nucleus. The protein resides in the cytoplasm. Its subcellular location is the cytoplasmic vesicle. It is found in the secretory vesicle. The protein localises to the acrosome. Promotes dephosphorylation of transcriptional activator STAT3 by interacting with both STAT3 and protein phosphatase PTPN2. This promotes interaction of PTPN2 with STAT3 and mediates STAT3 dephosphorylation by PTPN2, leading to negative regulation of STAT3 transcriptional activator activity. May be required for spermiogenesis or sperm function. This is Protein FAM220A from Homo sapiens (Human).